The chain runs to 180 residues: Der GTPase-activating protein YihI (180 aa).

Disordered regions lie at residues 1-88 (MTRK…KERR) and 147-180 (PEVT…FGKE). Basic and acidic residues-rich tracts occupy residues 18-33 (FREK…ARKS), 50-67 (EALD…DPRL), 77-88 (VEKKPTTKKERR), and 153-163 (APVRKGAKTDE). Residues 164 to 173 (DLLDQFENMD) show a composition bias toward acidic residues.

This sequence belongs to the YihI family. As to quaternary structure, interacts with Der.

A GTPase-activating protein (GAP) that modifies Der/EngA GTPase function. May play a role in ribosome biogenesis. This chain is Der GTPase-activating protein YihI, found in Photobacterium profundum (strain SS9).